The sequence spans 483 residues: Putative inorganic phosphate cotransporter (483 aa).

7 helical membrane passes run 64–84 (YILS…GILA), 90–110 (LRFL…VPVA), 187–207 (IFYV…IFVY), 292–312 (LPYL…DWMI), 349–369 (ALTL…YSGF), 383–403 (FLMS…PIAA), and 420–440 (IVFF…NIFG). The interval 447-483 (WDNPSEDEQKPALESSSTTNPPRLSNGSSAPRAISSS) is disordered. Residues 460–483 (ESSSTTNPPRLSNGSSAPRAISSS) show a composition bias toward polar residues.

Belongs to the major facilitator superfamily. Sodium/anion cotransporter family.

It is found in the membrane. In terms of biological role, may be an inorganic phosphate cotransporter. This is Putative inorganic phosphate cotransporter (Picot) from Drosophila ananassae (Fruit fly).